The sequence spans 122 residues: UPF0231 protein VF_2154 (122 aa).

The protein belongs to the UPF0231 family.

The polypeptide is UPF0231 protein VF_2154 (Aliivibrio fischeri (strain ATCC 700601 / ES114) (Vibrio fischeri)).